Consider the following 296-residue polypeptide: 4-hydroxybenzoate octaprenyltransferase (296 aa).

Helical transmembrane passes span 28-48, 52-72, 102-122, 146-166, 169-189, 219-239, 241-261, and 275-295; these read PIGI…AGKG, LINI…GCVI, ALVF…LTNA, YYPQ…AFTA, GDLP…TVGY, VIIL…GARF, LGGW…WEFW, and FLHN…DYAF.

The protein belongs to the UbiA prenyltransferase family. It depends on Mg(2+) as a cofactor.

It is found in the cell inner membrane. It catalyses the reaction all-trans-octaprenyl diphosphate + 4-hydroxybenzoate = 4-hydroxy-3-(all-trans-octaprenyl)benzoate + diphosphate. The protein operates within cofactor biosynthesis; ubiquinone biosynthesis. Functionally, catalyzes the prenylation of para-hydroxybenzoate (PHB) with an all-trans polyprenyl group. Mediates the second step in the final reaction sequence of ubiquinone-8 (UQ-8) biosynthesis, which is the condensation of the polyisoprenoid side chain with PHB, generating the first membrane-bound Q intermediate 3-octaprenyl-4-hydroxybenzoate. The polypeptide is 4-hydroxybenzoate octaprenyltransferase (Pseudomonas fluorescens (strain SBW25)).